The sequence spans 122 residues: NADH-quinone oxidoreductase subunit A (122 aa).

3 helical membrane-spanning segments follow: residues 10–30, 66–86, and 91–111; these read MIVLIFLLLGILLPVVALTLG, IFALLFVIFDVETLFLYPWAV, and LGLFALIEMLIFVVMLLVGLA.

This sequence belongs to the complex I subunit 3 family. In terms of assembly, NDH-1 is composed of 14 different subunits. Subunits NuoA, H, J, K, L, M, N constitute the membrane sector of the complex.

The protein localises to the cell membrane. The enzyme catalyses a quinone + NADH + 5 H(+)(in) = a quinol + NAD(+) + 4 H(+)(out). In terms of biological role, NDH-1 shuttles electrons from NADH, via FMN and iron-sulfur (Fe-S) centers, to quinones in the respiratory chain. The immediate electron acceptor for the enzyme in this species is believed to be a menaquinone. Couples the redox reaction to proton translocation (for every two electrons transferred, four hydrogen ions are translocated across the cytoplasmic membrane), and thus conserves the redox energy in a proton gradient. The sequence is that of NADH-quinone oxidoreductase subunit A from Bacillus mycoides (strain KBAB4) (Bacillus weihenstephanensis).